A 260-amino-acid chain; its full sequence is Thrombin-like enzyme gloshedobin (260 aa).

An N-terminal signal peptide occupies residues 1–18 (MVLIRVQANLLILQLSYA). The propeptide occupies 19–24 (QKSSEL). The 228-residue stretch at 25–252 (IIGGDECNIN…TEWIQSIIAG (228 aa)) folds into the Peptidase S1 domain. 6 cysteine pairs are disulfide-bonded: C31–C165, C52–C68, C100–C258, C144–C212, C176–C191, and C202–C227. Residues H67 and D112 each act as charge relay system in the active site. 2 N-linked (GlcNAc...) asparagine glycosylation sites follow: N123 and N124. The active-site Charge relay system is the S206.

The protein belongs to the peptidase S1 family. Snake venom subfamily. In terms of assembly, monomer. In terms of tissue distribution, expressed by the venom gland.

The protein localises to the secreted. Its activity is regulated as follows. Completely inhibited by PMSF, and N-tosyl-Lphenylalanine chloromethyl ketone (TPCK) and poorly inhibited by benzamidine and derivates. Not inhibited by EDTA, heparin and hirudin. Functionally, thrombin-like snake venom serine protease. The recombinant form clots fibrinogen by cleaving fibrinogen Aalpha chain (FGA), and slowly Bbeta chain (FGB). Has amidolytic activities. This chain is Thrombin-like enzyme gloshedobin, found in Gloydius shedaoensis (Shedao island pit viper).